Reading from the N-terminus, the 251-residue chain is Glucosamine-6-phosphate deaminase (251 aa).

Aspartate 73 (proton acceptor; for enolization step) is an active-site residue. Asparagine 142 acts as the For ring-opening step in catalysis. Catalysis depends on histidine 144, which acts as the Proton acceptor; for ring-opening step. The active-site For ring-opening step is the glutamate 149.

This sequence belongs to the glucosamine/galactosamine-6-phosphate isomerase family. NagB subfamily.

The enzyme catalyses alpha-D-glucosamine 6-phosphate + H2O = beta-D-fructose 6-phosphate + NH4(+). It functions in the pathway amino-sugar metabolism; N-acetylneuraminate degradation; D-fructose 6-phosphate from N-acetylneuraminate: step 5/5. Its function is as follows. Catalyzes the reversible isomerization-deamination of glucosamine 6-phosphate (GlcN6P) to form fructose 6-phosphate (Fru6P) and ammonium ion. The protein is Glucosamine-6-phosphate deaminase of Rhodopirellula baltica (strain DSM 10527 / NCIMB 13988 / SH1).